Consider the following 488-residue polypeptide: MSLPQHQNRDAARRAPDDDDDAEEETMANDYREQVQYDGMDDMDRMPSISNNQDIHAQLQAAATPLEFQATLETKFASYDNYCNLFHYILNSEGPVDLEVPNYYWAWDVIDEFIYQFNSFCSYRQKVALKNDNEEEITLLRENPNTWGCYSVLNVLYSLIQRSQISEQLAAMKRGEDAALYAGEYGNRPLYKMLGYFSIIGLLRVHCLLGDFSLALKTLDDIELNKKAMFARVMAAHFTTYYYVGFSYMMMRRYADAIRMFSHILVYVSRTKNFQKNAQYDSITKKNDQMYALVAICVAFHPTRLDDTIHTALREKYGEQFNRLQRGGPDALPLFEELFRTACPKFISPTPPDFDNPEVNIDPVEHHLRIFMDEVKNNMMSPTVKSYLKLYTTMDLKKLAGFLEVEPEKLRCWLLVNKQRNRQTRWSEGGLLERRGDPQQRSRLRHGKEISSTCLRPRSAGDWSTGIFVIWPGHTKARRRASRGRPLF.

Disordered stretches follow at residues 1–34 and 427–449; these read MSLP…YREQ and SEGG…HGKE. The segment covering 7–16 has biased composition (basic and acidic residues); it reads QNRDAARRAP. Residues 17 to 27 show a composition bias toward acidic residues; that stretch reads DDDDDAEEETM. A PCI domain is found at 256-450; the sequence is DAIRMFSHIL…RSRLRHGKEI (195 aa). The segment covering 431–440 has biased composition (basic and acidic residues); the sequence is LLERRGDPQQ.

It belongs to the eIF-3 subunit L family. As to quaternary structure, component of the eukaryotic translation initiation factor 3 (eIF-3) complex.

The protein localises to the cytoplasm. In terms of biological role, component of the eukaryotic translation initiation factor 3 (eIF-3) complex, which is involved in protein synthesis of a specialized repertoire of mRNAs and, together with other initiation factors, stimulates binding of mRNA and methionyl-tRNAi to the 40S ribosome. The eIF-3 complex specifically targets and initiates translation of a subset of mRNAs involved in cell proliferation. The sequence is that of Eukaryotic translation initiation factor 3 subunit L from Phaeosphaeria nodorum (strain SN15 / ATCC MYA-4574 / FGSC 10173) (Glume blotch fungus).